The sequence spans 68 residues: Large ribosomal subunit protein bL35 (68 aa).

Belongs to the bacterial ribosomal protein bL35 family.

The protein is Large ribosomal subunit protein bL35 of Rickettsia felis (strain ATCC VR-1525 / URRWXCal2) (Rickettsia azadi).